We begin with the raw amino-acid sequence, 60 residues long: Small ribosomal subunit protein eS31 (60 aa).

Zn(2+)-binding residues include Cys32, Cys35, Cys50, and Cys53. Residues 32 to 53 form a C4-type zinc finger; that stretch reads CPRCGAGVFMGEHKDRFSCGKC.

Belongs to the eukaryotic ribosomal protein eS31 family. In terms of assembly, part of the 30S ribosomal subunit. Zn(2+) is required as a cofactor.

This chain is Small ribosomal subunit protein eS31, found in Methanocorpusculum labreanum (strain ATCC 43576 / DSM 4855 / Z).